A 287-amino-acid polypeptide reads, in one-letter code: 4-hydroxybenzoate octaprenyltransferase (287 aa).

Helical transmembrane passes span W41–M61, W89–L109, F133–F153, N158–Y178, L218–W238, and N267–S287.

This sequence belongs to the UbiA prenyltransferase family. Mg(2+) is required as a cofactor.

The protein resides in the cell inner membrane. It catalyses the reaction all-trans-octaprenyl diphosphate + 4-hydroxybenzoate = 4-hydroxy-3-(all-trans-octaprenyl)benzoate + diphosphate. It participates in cofactor biosynthesis; ubiquinone biosynthesis. Its function is as follows. Catalyzes the prenylation of para-hydroxybenzoate (PHB) with an all-trans polyprenyl group. Mediates the second step in the final reaction sequence of ubiquinone-8 (UQ-8) biosynthesis, which is the condensation of the polyisoprenoid side chain with PHB, generating the first membrane-bound Q intermediate 3-octaprenyl-4-hydroxybenzoate. The polypeptide is 4-hydroxybenzoate octaprenyltransferase (Burkholderia multivorans (strain ATCC 17616 / 249)).